A 319-amino-acid chain; its full sequence is HTH-type transcriptional regulator YidZ (319 aa).

Positions 8 to 65 (LDLNLLLCLQLLMQERSVTKAAKRMNVTPSAVSKSLAKLRAWFDDPLFVNTPLGLAPT) constitute an HTH lysR-type domain. Residues 25–44 (VTKAAKRMNVTPSAVSKSLA) constitute a DNA-binding region (H-T-H motif).

The protein belongs to the LysR transcriptional regulatory family.

Its function is as follows. Involved in anaerobic NO protection. The sequence is that of HTH-type transcriptional regulator YidZ from Salmonella typhi.